The chain runs to 328 residues: Malate dehydrogenase (328 aa).

Glycine 12–alanine 18 is a binding site for NAD(+). Substrate-binding residues include arginine 93 and arginine 99. NAD(+) is bound by residues asparagine 106, glutamine 113, and valine 130–asparagine 132. Positions 132 and 163 each coordinate substrate. Residue histidine 188 is the Proton acceptor of the active site.

The protein belongs to the LDH/MDH superfamily. MDH type 2 family.

It catalyses the reaction (S)-malate + NAD(+) = oxaloacetate + NADH + H(+). Catalyzes the reversible oxidation of malate to oxaloacetate. This is Malate dehydrogenase from Burkholderia multivorans (strain ATCC 17616 / 249).